The primary structure comprises 108 residues: uncharacterized protein (108 aa).

This is an uncharacterized protein from Mycoplasma pneumoniae (strain ATCC 29342 / M129 / Subtype 1) (Mycoplasmoides pneumoniae).